A 736-amino-acid polypeptide reads, in one-letter code: Orphan sodium- and chloride-dependent neurotransmitter transporter NTT5 (736 aa).

Residues 1–138 (MKTEAQPSTS…FAYLWLNSGG (138 aa)) lie on the Cytoplasmic side of the membrane. Transmembrane regions (helical) follow at residues 139 to 159 (CSFA…LLFL), 177 to 197 (IIAP…FILG), and 199 to 219 (YFNV…QFPV). Topologically, residues 220 to 263 (PWEKCPLTMNSSGFDPECERTTPSIYFWYQQALKASDRIEDGGS) are extracellular. A glycan (N-linked (GlcNAc...) asparagine) is linked at asparagine 229. The next 4 membrane-spanning stretches (helical) occupy residues 264-284 (PVYS…AFMI), 290-310 (TGKV…GFFI), 338-358 (VWSL…GSVA), and 383-403 (LTLL…ATVI). At 404-495 (THRCCERNAE…EAMSFLPPSV (92 aa)) the chain is on the extracellular side. Helical transmembrane passes span 496-516 (FWSF…AIGI), 534-554 (HTKL…LFFT), 568-588 (YWIV…VSWA), 609-629 (IFGW…FVTM), and 659-679 (ALLL…AYFV). Residues 680–736 (YCRIHRIPFRPKSGDGPMTASTSLPLSHQLTPSKEVQKEEILQVDETKYPSTCNVTS) are Cytoplasmic-facing.

Belongs to the sodium:neurotransmitter symporter (SNF) (TC 2.A.22) family. SLC6A16 subfamily. In terms of tissue distribution, highly expressed in peripheral tissues, particularly in testis, pancreas, and prostate.

It is found in the membrane. This is Orphan sodium- and chloride-dependent neurotransmitter transporter NTT5 (SLC6A16) from Homo sapiens (Human).